The chain runs to 153 residues: UPAR/Ly6 domain-containing protein cold (153 aa).

The N-terminal stretch at 1-25 (MKSWEIAVVLVAAVYLCSQVNFVAG) is a signal peptide. Residues 26–130 (LECYVCSNQT…FVISGAPSRQ (105 aa)) lie on the Extracellular side of the membrane. 6 disulfide bridges follow: cysteine 28–cysteine 55, cysteine 31–cysteine 41, cysteine 48–cysteine 81, cysteine 87–cysteine 112, cysteine 99–cysteine 109, and cysteine 113–cysteine 118. Asparagine 33 carries an N-linked (GlcNAc...) asparagine glycan. Serine 124 is lipidated: GPI-anchor amidated serine. A propeptide spans 125–153 (GAPSRQGYGVCLTLLTALLGLGSWLIPRS) (removed in mature form). A helical transmembrane segment spans residues 131–151 (GYGVCLTLLTALLGLGSWLIP). The Cytoplasmic segment spans residues 152-153 (RS).

Belongs to the snake toxin-like superfamily. In terms of processing, GPI-anchored. In terms of tissue distribution, expressed in all tissues that form septate junctions, including hindgut, trachea, epidermis and dorsal pouch. Expressed in subperineurial glial cells that form the hemolymph-brain barrier of the central nervous system.

The protein resides in the endosome membrane. It localises to the endoplasmic reticulum membrane. Its subcellular location is the cell membrane. The protein localises to the cell junction. It is found in the septate junction. Required for septate junction assembly, possibly by organizing the preassembly and transport of septate junction proteins such as dlg1/disks large 1 and Nrx-IV/Neurexin-IV. Involved in paracellular barrier functions of trachea, hindgut and salivary gland mediated by epithelial cell septate junctions. Involved in paracellular barrier functions of the hemolymph-brain barrier (insect blood-brain barrier) mediated by glial cell septate junctions. Required for maintenance of septate junctions in imaginal disk epithelial cells. Involved in the epithelial cell wound-healing response. Directly or indirectly mediates cell-cell adhesion during septate junction formation. In Drosophila melanogaster (Fruit fly), this protein is UPAR/Ly6 domain-containing protein cold.